A 135-amino-acid polypeptide reads, in one-letter code: Fluoride-specific ion channel FluC 2 (135 aa).

4 consecutive transmembrane segments (helical) span residues 5–25, 36–56, 68–88, and 100–120; these read VLAA…GLLA, WGTV…METL, PFLG…ITDA, and ALLA…AAAG. Positions 76 and 79 each coordinate Na(+).

This sequence belongs to the fluoride channel Fluc/FEX (TC 1.A.43) family.

The protein localises to the cell membrane. The catalysed reaction is fluoride(in) = fluoride(out). With respect to regulation, na(+) is not transported, but it plays an essential structural role and its presence is essential for fluoride channel function. In terms of biological role, fluoride-specific ion channel. Important for reducing fluoride concentration in the cell, thus reducing its toxicity. The chain is Fluoride-specific ion channel FluC 2 from Thermobifida fusca (strain YX).